Consider the following 460-residue polypeptide: GTPase Der (460 aa).

EngA-type G domains lie at 9-171 (KTIA…SLNQ) and 199-370 (IQVG…ECFS). GTP-binding positions include 15–22 (GQPNVGKS), 62–66 (DTGGM), 123–126 (NKID), 205–212 (GRVNVGKS), 252–256 (DTAGI), and 316–319 (NKWD). Positions 371–455 (RRIPTSLLNS…PLILNAKDKK (85 aa)) constitute a KH-like domain.

This sequence belongs to the TRAFAC class TrmE-Era-EngA-EngB-Septin-like GTPase superfamily. EngA (Der) GTPase family. Associates with the 50S ribosomal subunit.

Functionally, GTPase that plays an essential role in the late steps of ribosome biogenesis. The protein is GTPase Der of Helicobacter pylori (strain G27).